The primary structure comprises 185 residues: PXMP2/4 family protein 4 (185 aa).

Transmembrane regions (helical) follow at residues 63 to 83 (MAVF…KYLD), 100 to 120 (IDQV…MGIL), and 141 to 161 (VSDC…ISSI).

It belongs to the peroxisomal membrane protein PXMP2/4 family.

The protein resides in the membrane. This Dictyostelium discoideum (Social amoeba) protein is PXMP2/4 family protein 4.